Here is a 58-residue protein sequence, read N- to C-terminus: Small ribosomal subunit protein bS21 (58 aa).

The disordered stretch occupies residues 39-58 (DKPSVKKRAKSKAAAKYRSR). Over residues 43 to 58 (VKKRAKSKAAAKYRSR) the composition is skewed to basic residues.

Belongs to the bacterial ribosomal protein bS21 family.

This is Small ribosomal subunit protein bS21 (rpsU) from Chlamydia pneumoniae (Chlamydophila pneumoniae).